The chain runs to 288 residues: MGEFSTLLQQGNAWFFIPSAILLGVLHGLEPGHSKTMMAAFIIAIKGTIKQAVMLGLAATLSHTAVVWLIALGGMYVSRAFTAESVEPWLQLVSAIIILSTAFWMFWRTWKGERDGLANRLPAHTHHHHDHEHHHHDHDHDHHHDHQHVHISLKGLTDGSHAWQDAHERAHATDIQRRFHDREVTNGQILLFGLTGGLIPCPAAITVLLICIQLKAFTLGATMVLCFSIGLALTLVAVGVGAAISVQQAAKRWSGFNTLARKAPYFSSILIGLVGLYMGMHGYLGIIR.

The Periplasmic portion of the chain corresponds to 1 to 12 (MGEFSTLLQQGN). Residues 13 to 33 (AWFFIPSAILLGVLHGLEPGH) traverse the membrane as a helical segment. Residues 34–51 (SKTMMAAFIIAIKGTIKQ) lie on the Cytoplasmic side of the membrane. A helical transmembrane segment spans residues 52 to 72 (AVMLGLAATLSHTAVVWLIAL). Residues 73–85 (GGMYVSRAFTAES) lie on the Periplasmic side of the membrane. Residues 86–106 (VEPWLQLVSAIIILSTAFWMF) form a helical membrane-spanning segment. Topologically, residues 107 to 188 (WRTWKGERDG…FHDREVTNGQ (82 aa)) are cytoplasmic. Positions 125 to 137 (THHHHDHEHHHHD) are enriched in basic residues. The disordered stretch occupies residues 125 to 144 (THHHHDHEHHHHDHDHDHHH). Residues 189 to 209 (ILLFGLTGGLIPCPAAITVLL) traverse the membrane as a helical segment. Topologically, residues 210-223 (ICIQLKAFTLGATM) are periplasmic. Residues 224–244 (VLCFSIGLALTLVAVGVGAAI) form a helical membrane-spanning segment. Topologically, residues 245–266 (SVQQAAKRWSGFNTLARKAPYF) are cytoplasmic. The chain crosses the membrane as a helical span at residues 267 to 287 (SSILIGLVGLYMGMHGYLGII). Residue arginine 288 is a topological domain, periplasmic.

This sequence belongs to the NiCoT transporter (TC 2.A.52) family. RcnA subfamily.

It localises to the cell inner membrane. In terms of biological role, efflux system for nickel and cobalt. In Citrobacter koseri (strain ATCC BAA-895 / CDC 4225-83 / SGSC4696), this protein is Nickel/cobalt efflux system RcnA (rcnA).